An 864-amino-acid chain; its full sequence is Paramyosin (864 aa).

The tract at residues 1–30 (MSSLYRDLDSDVSSTRIVRHSYNVYRGSSP) is nonhelical region. Positions 31–853 (SSQNRLESRI…QTVRRSRSMS (823 aa)) form a coiled coil. The nonhelical region stretch occupies residues 854–864 (VSREVTRVVRV).

This sequence belongs to the paramyosin family. Homodimer. Post-translationally, phosphorylated. As to expression, most abundantly expressed in muscle tissues from byssus retractor and adductor muscles. Low expression in foot, gill, inner mantle and outer mantle.

Its subcellular location is the cytoplasm. It is found in the myofibril. Its function is as follows. Paramyosin is a major structural component of many thick filaments isolated from invertebrate muscles. This chain is Paramyosin, found in Mytilus galloprovincialis (Mediterranean mussel).